The sequence spans 283 residues: Protein FdhE homolog (283 aa).

Belongs to the FdhE family.

Its subcellular location is the cytoplasm. In terms of biological role, necessary for formate dehydrogenase activity. The protein is Protein FdhE homolog of Aquifex aeolicus (strain VF5).